The following is a 237-amino-acid chain: dTDP-3-amino-3,4,6-trideoxy-alpha-D-glucopyranose N,N-dimethyltransferase (237 aa).

Residues Y14 and R17 each coordinate substrate. S-adenosyl-L-methionine-binding positions include Y21, A46, E67, 89–90 (DM), and M105. Substrate is bound by residues 145-147 (TFA), S152, 165-169 (RVSHS), and R229.

This sequence belongs to the methyltransferase TylM1/DesVI family. In terms of assembly, homodimer.

It carries out the reaction dTDP-3-amino-3,4,6-trideoxy-alpha-D-glucose + 2 S-adenosyl-L-methionine = dTDP-alpha-D-desosamine + 2 S-adenosyl-L-homocysteine + 2 H(+). The protein operates within antibiotic biosynthesis. In terms of biological role, S-adenosyl-L-methionine-dependent methyltransferase involved in the biosynthesis of desosamine, found in certain macrolide antibiotics such as erthyromycin, azithromycin, clarithromycin, and methymycin. Catalyzes the last step in the biosynthesis of dTDP-desosamine, i.e. the N,N-dimethylation of the 3-amino group of dTDP-3-amino-3,4,6-trideoxy-alpha-D-glucose. This chain is dTDP-3-amino-3,4,6-trideoxy-alpha-D-glucopyranose N,N-dimethyltransferase, found in Streptomyces venezuelae.